Reading from the N-terminus, the 355-residue chain is UDP-3-O-acylglucosamine N-acyltransferase (355 aa).

His258 acts as the Proton acceptor in catalysis.

Belongs to the transferase hexapeptide repeat family. LpxD subfamily. As to quaternary structure, homotrimer.

The enzyme catalyses a UDP-3-O-[(3R)-3-hydroxyacyl]-alpha-D-glucosamine + a (3R)-hydroxyacyl-[ACP] = a UDP-2-N,3-O-bis[(3R)-3-hydroxyacyl]-alpha-D-glucosamine + holo-[ACP] + H(+). Its pathway is bacterial outer membrane biogenesis; LPS lipid A biosynthesis. Functionally, catalyzes the N-acylation of UDP-3-O-acylglucosamine using 3-hydroxyacyl-ACP as the acyl donor. Is involved in the biosynthesis of lipid A, a phosphorylated glycolipid that anchors the lipopolysaccharide to the outer membrane of the cell. The chain is UDP-3-O-acylglucosamine N-acyltransferase from Bradyrhizobium sp. (strain BTAi1 / ATCC BAA-1182).